A 130-amino-acid polypeptide reads, in one-letter code: MYSEVTRSIRVTVRPEYLAQQSQPEERRFVWAYHVRIENEGLETVQLRTRHWQVTDAQGRVQEVRGPGVVGEQPVLRPGEAFEYTSGTPLPTPSGFMVGSYGMVTASGEAFEVRIPAFSLDSPHGRSRPN.

Positions 3–127 constitute an ApaG domain; sequence SEVTRSIRVT…FSLDSPHGRS (125 aa).

The chain is Protein ApaG from Rhodospirillum centenum (strain ATCC 51521 / SW).